The chain runs to 305 residues: Ribonuclease BN (305 aa).

H64, H66, D68, H69, H141, D212, and H270 together coordinate Zn(2+). D68 (proton acceptor) is an active-site residue.

Belongs to the RNase Z family. RNase BN subfamily. Homodimer. It depends on Zn(2+) as a cofactor.

In terms of biological role, zinc phosphodiesterase, which has both exoribonuclease and endoribonuclease activities. The polypeptide is Ribonuclease BN (Shigella boydii serotype 18 (strain CDC 3083-94 / BS512)).